Here is a 449-residue protein sequence, read N- to C-terminus: MSPQTETKASVGFKAGVKDYKLTYYTPDYETKDTDILAAFRVTPQPGVPPEEAGAAVAAESSTGTWTAVWTDGLTSLDRYKGRCYHIEPVAGEETQFIAYVAYPLDLFEEGSVTNMFTSIVGNAFGFKALRALRLEDLRIPTTYSKTFQGPPHGIQVERDKLNKYGRPLLGCTIKPKLGLSAKNYGRAVYECLRGGLDFTKDDENVNSQPFMRWRDRFLFCAEALYKAQAETGEIKGHYLNATAGTCEEMMKRAVFARELGVPIVMHDYLTGGFTANTSLAHYCRDNGLLLHIHRAMHAVIDRQKNHGMHFRVLAKALRMSGGDHIHAGTVVGKLEGERDITLGFVDLLRDDFIEKDRSRGIYFTQDWVSLPGVLPVASGGIHVWHMPALTEIFGDDAVLQFGGGTLGHPWGNAPGAVANRVALEACVQARNEGRDLAREGNEIIREAS.

Positions 1–2 (MS) are excised as a propeptide. Pro3 carries the post-translational modification N-acetylproline. Lys14 carries the N6,N6,N6-trimethyllysine modification. Substrate contacts are provided by Asn123 and Thr173. The active-site Proton acceptor is the Lys175. Lys177 is a substrate binding site. Lys201, Asp203, and Glu204 together coordinate Mg(2+). Lys201 is modified (N6-carboxylysine). Catalysis depends on His294, which acts as the Proton acceptor. 3 residues coordinate substrate: Arg295, His327, and Ser379.

It belongs to the RuBisCO large chain family. Type I subfamily. Heterohexadecamer of 8 large chains and 8 small chains; disulfide-linked. The disulfide link is formed within the large subunit homodimers. Requires Mg(2+) as cofactor. In terms of processing, the disulfide bond which can form in the large chain dimeric partners within the hexadecamer appears to be associated with oxidative stress and protein turnover.

It localises to the plastid. The protein resides in the chloroplast. The enzyme catalyses 2 (2R)-3-phosphoglycerate + 2 H(+) = D-ribulose 1,5-bisphosphate + CO2 + H2O. It catalyses the reaction D-ribulose 1,5-bisphosphate + O2 = 2-phosphoglycolate + (2R)-3-phosphoglycerate + 2 H(+). Functionally, ruBisCO catalyzes two reactions: the carboxylation of D-ribulose 1,5-bisphosphate, the primary event in carbon dioxide fixation, as well as the oxidative fragmentation of the pentose substrate in the photorespiration process. Both reactions occur simultaneously and in competition at the same active site. In Hippocratea richardiana, this protein is Ribulose bisphosphate carboxylase large chain.